A 224-amino-acid chain; its full sequence is MDKRIPVGADTLRIRNLGLQDYDTVWQAMRDFTVRRDSATVDELWWVEHPPVFTLGLNGQECHLRDVGDIPVVRCDRGGQVTYHGPGQSIVYILVDLRRRALGVRQLVDALELSVVDLLQSYEIETERRANAPGVYVQGRKIASLGLRVRKGCCYHGLSLNVAMDLSPFYRIDPCGYSGMEVIDLKRLGMELPLADVQQNLSRYLVRRLGYSAPFYGEENRMIK.

The BPL/LPL catalytic domain maps to 38 to 213 (SATVDELWWV…YLVRRLGYSA (176 aa)). Substrate is bound by residues 77 to 84 (RGGQVTYH), 144 to 146 (SLG), and 157 to 159 (GLS). Catalysis depends on Cys175, which acts as the Acyl-thioester intermediate.

This sequence belongs to the LipB family.

Its subcellular location is the cytoplasm. It catalyses the reaction octanoyl-[ACP] + L-lysyl-[protein] = N(6)-octanoyl-L-lysyl-[protein] + holo-[ACP] + H(+). The protein operates within protein modification; protein lipoylation via endogenous pathway; protein N(6)-(lipoyl)lysine from octanoyl-[acyl-carrier-protein]: step 1/2. Catalyzes the transfer of endogenously produced octanoic acid from octanoyl-acyl-carrier-protein onto the lipoyl domains of lipoate-dependent enzymes. Lipoyl-ACP can also act as a substrate although octanoyl-ACP is likely to be the physiological substrate. This is Octanoyltransferase from Nitrosococcus oceani (strain ATCC 19707 / BCRC 17464 / JCM 30415 / NCIMB 11848 / C-107).